A 399-amino-acid polypeptide reads, in one-letter code: Enoyl-[acyl-carrier-protein] reductase [NADH] (399 aa).

NAD(+)-binding positions include 48–53 (GASTGY), 74–75 (FE), 111–112 (DA), and 139–140 (LA). Tyr-225 is a binding site for substrate. The active-site Proton donor is the Tyr-235. NAD(+)-binding positions include Lys-244 and 274–276 (VVT).

The protein belongs to the TER reductase family. As to quaternary structure, monomer.

It catalyses the reaction a 2,3-saturated acyl-[ACP] + NAD(+) = a (2E)-enoyl-[ACP] + NADH + H(+). The protein operates within lipid metabolism; fatty acid biosynthesis. Involved in the final reduction of the elongation cycle of fatty acid synthesis (FAS II). Catalyzes the reduction of a carbon-carbon double bond in an enoyl moiety that is covalently linked to an acyl carrier protein (ACP). The polypeptide is Enoyl-[acyl-carrier-protein] reductase [NADH] (Yersinia enterocolitica serotype O:8 / biotype 1B (strain NCTC 13174 / 8081)).